The chain runs to 219 residues: Large ribosomal subunit protein uL3 (219 aa).

A disordered region spans residues 136–156 (GASHGAHRNHRKPGSIGGCAT).

Belongs to the universal ribosomal protein uL3 family. As to quaternary structure, part of the 50S ribosomal subunit. Forms a cluster with proteins L14 and L19.

Functionally, one of the primary rRNA binding proteins, it binds directly near the 3'-end of the 23S rRNA, where it nucleates assembly of the 50S subunit. This Kineococcus radiotolerans (strain ATCC BAA-149 / DSM 14245 / SRS30216) protein is Large ribosomal subunit protein uL3.